The sequence spans 79 residues: Sulfur carrier protein TusA (79 aa).

Cys17 functions as the Cysteine persulfide intermediate in the catalytic mechanism.

The protein belongs to the sulfur carrier protein TusA family.

It is found in the cytoplasm. Its function is as follows. Sulfur carrier protein which probably makes part of a sulfur-relay system. The protein is Sulfur carrier protein TusA of Haemophilus influenzae (strain 86-028NP).